Consider the following 209-residue polypeptide: HTLV-1 basic zipper factor (209 aa).

The interval Asp-48–Leu-162 is disordered. Basic and acidic residues-rich tracts occupy residues Ala-70–Lys-87 and Arg-94–Ala-114. Positions Lys-87–Lys-92 match the Nuclear localization signal 1 motif. 2 short sequence motifs (nuclear localization signal) span residues Arg-116–Ala-120 and Arg-137–Lys-141. Residues Lys-122–Gln-160 show a composition bias toward basic and acidic residues.

It belongs to the HTLV-1 HBZ protein family. In terms of assembly, interacts with host ATF4; this interaction inhibits viral RNA transcriptional activation by preventing ATF4 binding to Tax-responsive elements. Interacts with host CREB1; this interaction inhibits host CREB1 transcriptional activity. Interacts with host JUN, JUNB and JUND. Interacts with host EP300.

The protein localises to the host nucleus. Contributes to the regulation of viral RNA transcription by interacting with host proteins involved in transcriptional activation such as ATF4, or CREB1, and by inhibiting their activity. Additionally, HBZ suppresses host NF-kappa-B-driven transcription mediated by host RELA as well as transcription of some classical NF-kappa-B target genes, including IL8, IL2RA, IRF4, VCAM1, and VEGFA. In Homo sapiens (Human), this protein is HTLV-1 basic zipper factor (HBZ).